A 93-amino-acid chain; its full sequence is Small ribosomal subunit protein uS19 (93 aa).

Belongs to the universal ribosomal protein uS19 family.

Functionally, protein S19 forms a complex with S13 that binds strongly to the 16S ribosomal RNA. This Frankia alni (strain DSM 45986 / CECT 9034 / ACN14a) protein is Small ribosomal subunit protein uS19.